Consider the following 172-residue polypeptide: Adenine phosphoribosyltransferase (172 aa).

This sequence belongs to the purine/pyrimidine phosphoribosyltransferase family. Homodimer.

It is found in the cytoplasm. The catalysed reaction is AMP + diphosphate = 5-phospho-alpha-D-ribose 1-diphosphate + adenine. It functions in the pathway purine metabolism; AMP biosynthesis via salvage pathway; AMP from adenine: step 1/1. Catalyzes a salvage reaction resulting in the formation of AMP, that is energically less costly than de novo synthesis. This Prochlorococcus marinus (strain NATL2A) protein is Adenine phosphoribosyltransferase.